The chain runs to 132 residues: Salivary protein 15 Iper-2 (132 aa).

A signal peptide spans 1–18; that stretch reads MKVVCIIVLFVIVAVNES. 5 N-linked (GlcNAc...) asparagine glycosylation sites follow: Asn-24, Asn-36, Asn-62, Asn-89, and Asn-101. A CD4-binding region spans residues 113–132; that stretch reads GPNGQTCADKSQCVGHIPGC.

Belongs to the salp15 family. In terms of assembly, interacts with host CD4. Interacts with host DC-SIGN (CD209). (Microbial infection) Interacts with Borrelia outer surface protein C (OspC). In terms of tissue distribution, expressed in salivary glands from feeding female ticks. Highly expressed 1 day after start of feeding, and weakly expressed at the initiation of feeding and 4 days after start of feeding.

It localises to the secreted. Its function is as follows. Salivary tick protein that downregulates host immune system by binding to both dendritic cells, and CD4(+) T cells. Specifically binds to the CD4 coreceptor on T cells. This interaction prevents the activation of the Src kinase, Lck, and its downstream substrate Zap-70, and results in deficient activation of PLCgamma1, the repression of calcium fluxes triggered by T-cell antigen receptor (TCR) ligation, and a subsequent reduction in interleukin-2 production. This salivary protein also binds to DC-SIGN (CD209) on dendritic cells (DC) and activates the Raf-1 kinase/MEK signaling pathway that results in down-regulating expression of pro-inflammatory cytokines. Furthermore, it inhibits T cell proliferation induced by DCs. It also inhibits in vitro keratinocyte inflammation induced by Borrelia burgdorferi or by the major outer surface protein (OspC) of Borrelia. In addition, it downregulates chemokines and monocyte chemoattractant protein 1, as well as several antimicrobial peptides such as defensins, cathelicidin, psoriasin, and RNase 7. Apart from its immunomodulatory activities, it is also associated with protection of Borrelia spirochetes from antibody-mediated killing through its binding to OspC. In vivo, tests on different immune disease animal models show promising therapeutic results, e.g., in inhibiting HIV infection, experimental autoimmune encephalomyelitis, transplantation rejection, and asthma. Functionally, (Microbial infection) Protects Borrelia garinii from anti-Borrelia antibody-mediated cytotoxicity in vitro. May facilitate B.garinii transmission in mouse model. (Microbial infection) Protects Borrelia burgdorferi from anti-Borrelia antibody-mediated cytotoxicity in vitro. In terms of biological role, (Microbial infection) Protects Borrelia afzelii from anti-Borrelia antibody-mediated cytotoxicity in vitro. This Ixodes persulcatus (Taiga tick) protein is Salivary protein 15 Iper-2.